Consider the following 339-residue polypeptide: Methionine import ATP-binding protein MetN 2 (339 aa).

Positions 2 to 241 (ISFNNVSKLY…PKTKTTQNFV (240 aa)) constitute an ABC transporter domain. 38 to 45 (GFSGAGKS) provides a ligand contact to ATP.

This sequence belongs to the ABC transporter superfamily. Methionine importer (TC 3.A.1.24) family. In terms of assembly, the complex is composed of two ATP-binding proteins (MetN), two transmembrane proteins (MetI) and a solute-binding protein (MetQ).

The protein resides in the cell membrane. The enzyme catalyses L-methionine(out) + ATP + H2O = L-methionine(in) + ADP + phosphate + H(+). It catalyses the reaction D-methionine(out) + ATP + H2O = D-methionine(in) + ADP + phosphate + H(+). In terms of biological role, part of the ABC transporter complex MetNIQ involved in methionine import. Responsible for energy coupling to the transport system. This chain is Methionine import ATP-binding protein MetN 2, found in Bacillus cereus (strain ATCC 14579 / DSM 31 / CCUG 7414 / JCM 2152 / NBRC 15305 / NCIMB 9373 / NCTC 2599 / NRRL B-3711).